The primary structure comprises 1254 residues: Structural polyprotein (1254 aa).

The interval 1–33 (MFPFQPMYPMQPMPYRNPFAAPRRPWFPRTDPF) is necessary for nucleocapsid assembly and virus assembly. The interval 33–68 (FLAMQVQELTRSMANLTFKQRRDAPPEGPSAKKPKK) is host transcription inhibition. Residues 41 to 48 (LTRSMANL) carry the Supraphysiological nuclear export signal motif. Residues 45–119 (MANLTFKQRR…KKPGKRQRMV (75 aa)) form a disordered region. The Nuclear localization signal signature appears at 64-68 (KKPKK). Basic residues predominate over residues 80-92 (GKKKKNQGKKKAK). The interval 91–127 (AKTGPPNPKAQNGNKKKTNKKPGKRQRMVMKLESDKT) is binding to the viral RNA. A phosphothreonine mark is found at T93 and T108. A compositionally biased stretch (basic residues) spans 104–118 (NKKKTNKKPGKRQRM). Residues 112-126 (PGKRQRMVMKLESDK) form a ribosome-binding region. S124 carries the phosphoserine modification. The Peptidase S3 domain maps to 126–275 (KTFPIMLEGK…KYTPENCEQW (150 aa)). T127 carries the phosphothreonine modification. Active-site charge relay system residues include H152, D174, and S226. The interval 276–287 (SLVTTMCLLANV) is functions as an uncleaved signal peptide for the precursor of protein E3/E2. Over 276–701 (SLVTTMCLLA…HYYHRYPMST (426 aa)) the chain is Extracellular. N-linked (GlcNAc...) asparagine; by host glycosylation is found at N286, N546, and N652. A helical membrane pass occupies residues 702–722 (ILGLSICAAIATVSVAASTWL). The Cytoplasmic segment spans residues 723-757 (FCRSRVACLTPYRLTPNARIPFCLAVLCCARTARA). 3 S-palmitoyl cysteine; by host lipidation sites follow: C730, C750, and C751. Residues 730-750 (CLTPYRLTPNARIPFCLAVLC) are transient transmembrane before p62-6K protein processing. The Extracellular portion of the chain corresponds to 758–772 (ETTWESLDHLWNNNQ). Residues 773–793 (QMFWIQLLIPLAALIVVTRLL) form a helical membrane-spanning segment. The Cytoplasmic segment spans residues 794-795 (RC). Residues 796 to 816 (VCCVVPFLVMAGAAAGAYEHA) traverse the membrane as a helical segment. Topologically, residues 817 to 1224 (TTMPSQAGIS…SKTAWTWLTS (408 aa)) are extracellular. 4 disulfides stabilise this stretch: C861–C926, C874–C906, C875–C908, and C880–C890. Positions 896–913 (VYPFMWGGAYCFCDTENT) are E1 fusion peptide loop. N946 is a glycosylation site (N-linked (GlcNAc...) asparagine; by host). Intrachain disulfides connect C1071–C1083, C1113–C1188, C1118–C1192, and C1140–C1182. A helical membrane pass occupies residues 1225–1245 (LLGGSAVIIIIGLVLATIVAM). The Cytoplasmic segment spans residues 1246–1254 (YVLTNQKHN).

As to quaternary structure, homodimer. Homomultimer. Interacts with host karyopherin KPNA4; this interaction allows the nuclear import of the viral capsid protein. Interacts with spike glycoprotein E2. Interacts with host IRAK1; the interaction leads to inhibition of IRAK1-dependent signaling. Part of a tetrameric complex composed of host CRM1, host importin alpha/beta dimer and the viral capsid; this complex blocks the receptor-mediated transport through the nuclear pore. Interacts with host phosphatase PPP1CA; this interaction dephosphorylates the capsid protein, which increases its ability to bind to the viral genome. In terms of assembly, the precursor of protein E3/E2 and E1 form a heterodimer shortly after synthesis. Interacts with spike glycoprotein E2. The precursor of protein E3/E2 and E1 form a heterodimer shortly after synthesis. Processing of the precursor of protein E3/E2 into E2 and E3 results in a heterodimer of the spike glycoproteins E2 and E1. Spike at virion surface are constituted of three E2-E1 heterodimers. After target cell attachment and endocytosis, E1 change conformation to form homotrimers. Interacts with 6K protein. Interacts with host LDLRAD3; this interaction mediates viral entry to the host cell. As to quaternary structure, interacts with spike glycoprotein E1. Processing of the precursor of protein E3/E2 into E2 and E3 results in a heterodimer of the spike glycoproteins E2 and E1. Spike at virion surface are constituted of a trimer of E2-E1 heterodimers. Interacts with 6K protein. Interacts with host LDLRAD3; this interaction mediates viral entry to the host cell. In terms of assembly, oligomer. Interacts with spike glycoprotein E1. Interacts with spike glycoprotein E2. In terms of processing, structural polyprotein: Specific enzymatic cleavages in vivo yield mature proteins. Capsid protein is auto-cleaved during polyprotein translation, unmasking a signal peptide at the N-terminus of the precursor of E3/E2. The remaining polyprotein is then targeted to the host endoplasmic reticulum, where host signal peptidase cleaves it into pE2, 6K and E1 proteins. pE2 is further processed to mature E3 and E2 by host furin in trans-Golgi vesicle. Post-translationally, palmitoylated via thioester bonds. These palmitoylations may induce disruption of the C-terminus transmembrane. This would result in the reorientation of E2 C-terminus from lumenal to cytoplasmic side. Phosphorylated on serine and threonine residues. In terms of processing, N-glycosylated. Post-translationally, palmitoylated via thioester bonds.

The protein localises to the virion. It localises to the host cytoplasm. It is found in the host cell membrane. The protein resides in the host nucleus. Its subcellular location is the virion membrane. The enzyme catalyses Autocatalytic release of the core protein from the N-terminus of the togavirus structural polyprotein by hydrolysis of a -Trp-|-Ser- bond.. Functionally, forms an icosahedral capsid with a T=4 symmetry composed of 240 copies of the capsid protein surrounded by a lipid membrane through which penetrate 80 spikes composed of trimers of E1-E2 heterodimers. The capsid protein binds to the viral RNA genome at a site adjacent to a ribosome binding site for viral genome translation following genome release. Possesses a protease activity that results in its autocatalytic cleavage from the nascent structural protein. Following its self-cleavage, the capsid protein transiently associates with ribosomes, and within several minutes the protein binds to viral RNA and rapidly assembles into icosahedric core particles. The resulting nucleocapsid eventually associates with the cytoplasmic domain of the spike glycoprotein E2 at the cell membrane, leading to budding and formation of mature virions. In case of infection, new virions attach to target cells and after clathrin-mediated endocytosis their membrane fuses with the host endosomal membrane. This leads to the release of the nucleocapsid into the cytoplasm, followed by an uncoating event necessary for the genomic RNA to become accessible. The uncoating might be triggered by the interaction of capsid proteins with ribosomes. Binding of ribosomes would release the genomic RNA since the same region is genomic RNA-binding and ribosome-binding. Specifically inhibits interleukin-1 receptor-associated kinase 1/IRAK1-dependent signaling during viral entry, representing a means by which the alphaviruses may evade innate immune detection and activation prior to viral gene expression. Inhibits host transcription. Forms a tetrameric complex with XPO1/CRM1 and the nuclear import receptor importin. This complex blocks the central channel of host nuclear pores thereby inhibiting the receptor-mediated nuclear transport and thus the host mRNA and rRNA transcription. The inhibition of transcription is linked to a cytopathic effect on the host cell. Its function is as follows. Provides the signal sequence for the translocation of the precursor of protein E3/E2 to the host endoplasmic reticulum. Furin-cleaved E3 remains associated with spike glycoprotein E1 and mediates pH protection of the latter during the transport via the secretory pathway. After virion release from the host cell, the assembly protein E3 is gradually released in the extracellular space. In terms of biological role, plays a role in viral attachment to target host cell, by binding to the cell receptor LDLRAD3. Synthesized as a p62 precursor which is processed by furin at the cell membrane just before virion budding, giving rise to E2-E1 heterodimer. The p62-E1 heterodimer is stable, whereas E2-E1 is unstable and dissociate at low pH. p62 is processed at the last step, presumably to avoid E1 fusion activation before its final export to cell surface. E2 C-terminus contains a transitory transmembrane that would be disrupted by palmitoylation, resulting in reorientation of the C-terminal tail from lumenal to cytoplasmic side. This step is critical since E2 C-terminus is involved in budding by interacting with capsid proteins. This release of E2 C-terminus in cytoplasm occurs lately in protein export, and precludes premature assembly of particles at the endoplasmic reticulum membrane. Acts as a viroporin that participates in virus glycoprotein processing and transport to the plasma membrane, cell permeabilization and budding of viral particles. Disrupts the calcium homeostasis of the cell, probably at the endoplasmic reticulum level. This leads to cytoplasmic calcium elevation. Because of its lipophilic properties, the 6K protein is postulated to influence the selection of lipids that interact with the transmembrane domains of the glycoproteins, which, in turn, affects the deformability of the bilayer required for the extreme curvature that occurs as budding proceeds. Present in low amount in virions, about 3% compared to viral glycoproteins. Functionally, class II viral fusion protein. Fusion activity is inactive as long as E1 is bound to E2 in mature virion. After virus attachment to cell receptor LDLRAD3 and endocytosis, acidification of the endosome would induce dissociation of E1/E2 heterodimer and concomitant trimerization of the E1 subunits. This E1 trimer is fusion active, and promotes release of viral nucleocapsid in cytoplasm after endosome and viral membrane fusion. Efficient fusion requires the presence of cholesterol and sphingolipid in the target membrane. Fusion is optimal at levels of about 1 molecule of cholesterol per 2 molecules of phospholipids, and is specific for sterols containing a 3-beta-hydroxyl group. In Bos taurus (Bovine), this protein is Structural polyprotein.